We begin with the raw amino-acid sequence, 35 residues long: Peptide Hact-3 (35 aa).

As to expression, expressed in tentacles.

The protein localises to the nematocyst. The protein resides in the secreted. Its function is as follows. Peptide with unknown function. Does not exhibit antimicrobial activity against Escherichia coli and Staphylococcus aureus. In Heliofungia actiniformis (Mushroom coral), this protein is Peptide Hact-3.